A 113-amino-acid chain; its full sequence is ATP-dependent Clp protease adapter protein ClpS (113 aa).

The interval 1–24 (MTAQLHMMSDKHDQDNDASVLLQT) is disordered.

It belongs to the ClpS family. In terms of assembly, binds to the N-terminal domain of the chaperone ClpA.

Functionally, involved in the modulation of the specificity of the ClpAP-mediated ATP-dependent protein degradation. The protein is ATP-dependent Clp protease adapter protein ClpS of Ruegeria pomeroyi (strain ATCC 700808 / DSM 15171 / DSS-3) (Silicibacter pomeroyi).